The primary structure comprises 190 residues: Probable molybdenum cofactor guanylyltransferase (190 aa).

Residues 9-11 (LCG), Lys-21, Asp-65, and Asp-94 each bind GTP. A Mg(2+)-binding site is contributed by Asp-94.

This sequence belongs to the MobA family. Requires Mg(2+) as cofactor.

The protein localises to the cytoplasm. It catalyses the reaction Mo-molybdopterin + GTP + H(+) = Mo-molybdopterin guanine dinucleotide + diphosphate. Transfers a GMP moiety from GTP to Mo-molybdopterin (Mo-MPT) cofactor (Moco or molybdenum cofactor) to form Mo-molybdopterin guanine dinucleotide (Mo-MGD) cofactor. The polypeptide is Probable molybdenum cofactor guanylyltransferase (Flavobacterium johnsoniae (strain ATCC 17061 / DSM 2064 / JCM 8514 / BCRC 14874 / CCUG 350202 / NBRC 14942 / NCIMB 11054 / UW101) (Cytophaga johnsonae)).